The primary structure comprises 526 residues: Dual specificity tyrosine-phosphorylation-regulated kinase 2 (526 aa).

Composition is skewed to polar residues over residues 30 to 40 (TTQPNGLTTLG) and 60 to 70 (GSSSSLKSTDG). Positions 30-76 (TTQPNGLTTLGKSGLPVVQDRQSESAHRRQGSSSSLKSTDGTGKVKA) are disordered. T31 carries the post-translational modification Phosphothreonine; by ATM. Residues 114–116 (KKR) carry the Nuclear localization signal motif. In terms of domain architecture, Protein kinase spans 147–460 (YEVLKVIGKG…PSQALRHPWL (314 aa)). Residues 153-161 (IGKGSFGQV), K176, and 226-229 (FELL) each bind ATP. The active-site Proton acceptor is D273. A Phosphotyrosine modification is found at Y307. S367 carries the post-translational modification Phosphoserine; by ATM. Residues 462-499 (RRLPKPPTGEKASAKRITESTGAITSISKLPPTSSSAS) form a disordered region. A compositionally biased stretch (polar residues) spans 480–499 (ESTGAITSISKLPPTSSSAS).

The protein belongs to the protein kinase superfamily. CMGC Ser/Thr protein kinase family. MNB/DYRK subfamily. As to quaternary structure, interacts with MDM2. It depends on Mg(2+) as a cofactor. Requires Mn(2+) as cofactor. Phosphorylated on serine/threonine residues. Phosphorylation on Thr-31 and Ser-367 by ATM in response to genotoxic stress disrupts MDM2 binding and prevents MDM2-mediated ubiquitination and subsequent proteasome degradation, thus promoting p53/TP53-mediated apoptosis. Post-translationally, ubiquitination in nucleus by MDM2 in normal conditions leads to proteasome degradation.

The protein resides in the cytoplasm. Its subcellular location is the nucleus. The catalysed reaction is L-seryl-[protein] + ATP = O-phospho-L-seryl-[protein] + ADP + H(+). It carries out the reaction L-threonyl-[protein] + ATP = O-phospho-L-threonyl-[protein] + ADP + H(+). The enzyme catalyses L-tyrosyl-[protein] + ATP = O-phospho-L-tyrosyl-[protein] + ADP + H(+). Autophosphorylates on tyrosine residues. Functionally, serine/threonine-protein kinase involved in the control of mitotic transition and the regulation of cellular growth and/or development. This is Dual specificity tyrosine-phosphorylation-regulated kinase 2 from Gallus gallus (Chicken).